A 113-amino-acid chain; its full sequence is Mediator of RNA polymerase II transcription subunit 22 (113 aa).

Belongs to the Mediator complex subunit 22 family. As to quaternary structure, component of the Mediator complex.

The protein localises to the nucleus. In terms of biological role, component of the Mediator complex, a coactivator involved in the regulated transcription of nearly all RNA polymerase II-dependent genes. Mediator functions as a bridge to convey information from gene-specific regulatory proteins to the basal RNA polymerase II transcription machinery. Mediator is recruited to promoters by direct interactions with regulatory proteins and serves as a scaffold for the assembly of a functional preinitiation complex with RNA polymerase II and the general transcription factors. In Candida glabrata (strain ATCC 2001 / BCRC 20586 / JCM 3761 / NBRC 0622 / NRRL Y-65 / CBS 138) (Yeast), this protein is Mediator of RNA polymerase II transcription subunit 22 (SRB6).